Reading from the N-terminus, the 356-residue chain is Protein RecA (356 aa).

77 to 84 is an ATP binding site; sequence GPESSGKT.

Belongs to the RecA family.

The protein localises to the cytoplasm. Its function is as follows. Can catalyze the hydrolysis of ATP in the presence of single-stranded DNA, the ATP-dependent uptake of single-stranded DNA by duplex DNA, and the ATP-dependent hybridization of homologous single-stranded DNAs. It interacts with LexA causing its activation and leading to its autocatalytic cleavage. The protein is Protein RecA of Caulobacter sp. (strain K31).